Consider the following 309-residue polypeptide: 4-diphosphocytidyl-2-C-methyl-D-erythritol kinase (309 aa).

Residue Lys11 is part of the active site. Residue 94–104 (PVAAGLAGGSA) participates in ATP binding. Asp136 is a catalytic residue.

It belongs to the GHMP kinase family. IspE subfamily.

It carries out the reaction 4-CDP-2-C-methyl-D-erythritol + ATP = 4-CDP-2-C-methyl-D-erythritol 2-phosphate + ADP + H(+). Its pathway is isoprenoid biosynthesis; isopentenyl diphosphate biosynthesis via DXP pathway; isopentenyl diphosphate from 1-deoxy-D-xylulose 5-phosphate: step 3/6. Its function is as follows. Catalyzes the phosphorylation of the position 2 hydroxy group of 4-diphosphocytidyl-2C-methyl-D-erythritol. The sequence is that of 4-diphosphocytidyl-2-C-methyl-D-erythritol kinase from Synechococcus sp. (strain JA-3-3Ab) (Cyanobacteria bacterium Yellowstone A-Prime).